A 144-amino-acid chain; its full sequence is UPF0102 protein BTH_I3148 (144 aa).

Residues 1 to 20 (MCHARAARQATGEAEAAPRD) are disordered.

Belongs to the UPF0102 family.

The polypeptide is UPF0102 protein BTH_I3148 (Burkholderia thailandensis (strain ATCC 700388 / DSM 13276 / CCUG 48851 / CIP 106301 / E264)).